The following is a 285-amino-acid chain: Probable methyltransferase ltbC (285 aa).

Positions 1 to 22 are disordered; that stretch reads MASTGQTNNYKQGYSSQTVETQ.

The protein belongs to the class I-like SAM-binding methyltransferase superfamily. In terms of assembly, monomer.

Its function is as follows. Probable methyltransferase; part of the gene cluster that mediates the biosynthesis of luteodienoside A, a glycosylated polyketide consisting of an unusual 1-O-beta-D-glucopyranosyl-myo-inositol (glucinol) ester of 3-hydroxy-2,2,4-trimethylocta-4,6-dienoic acid. The HR-PKS ltbA produces the trimethylated polyketide chain from acetyl-CoA, malonyl-CoA and S-adenosylmethionine (SAM), and the ltbA cAT domain then uses glucinol produced by the glycosyltransferase ltbB as an offloading substrate to release luteodienoside A. Since ltbA and ltbB are sufficient for the biosynthesis of luteodienoside A, the functions of the methyltransferase ltbC and the FAD-binding monooxygenase ltbD within the pathway remain obscur. The chain is Probable methyltransferase ltbC from Aspergillus luteorubrus.